The following is a 476-amino-acid chain: Transmembrane transporter FPSE_08127 (476 aa).

The helical transmembrane segment at 72 to 92 (ILAIPAALGALGSIGGSLCII) threads the bilayer. Asparagine 111 is a glycosylation site (N-linked (GlcNAc...) asparagine). Helical transmembrane passes span 133–153 (LVGVQIIIAQTLVTAGGVVAI), 164–184 (GTCTVAFGLISAIAVTAFSAI), 192–212 (WLTWIGFITFVIGVFIFVVAV), 231–251 (WAPIAYPSFVVGMVSVTNIFI), 275–295 (ACLVAGFIVGAMYLSFSLVIY), 317–337 (VAYGVSLPGLILGVGIYQHVA), 364–384 (LGINIALGTAAFIVAEAVPIL), 387–407 (LLGLAGAICLAPFSLIFPALL), and 431–451 (LIMMFGFFMMIAGFYSVVVLI).

This sequence belongs to the amino acid/polyamine transporter 2 family.

It localises to the membrane. In terms of biological role, transmembrane transporter; part of the Fusarium detoxification of benzoxazolinone cluster involved in the degradation of benzoxazolinones produced by the host plant. Maize, wheat, and rye produce the 2 benzoxazinone phytoanticipins 2,4-dihy-droxy-7-methoxy-1,4-benzoxazin-3-one (DIMBOA) and 2,4-dihydroxy-1,4-benzoxazin-3-one (DIBOA) that, due to their inherent instability once released, spontaneously degrade to the more stable corresponding benzoxazolinones, 6-methoxy-2-benzoxazolinone (MBOA) and 2-benzoxazolinone (BOA), respectively. FPSE_08127 is proposed to shuttle metabolites of benzoxazolinone degradation. The polypeptide is Transmembrane transporter FPSE_08127 (Fusarium pseudograminearum (strain CS3096) (Wheat and barley crown-rot fungus)).